A 737-amino-acid polypeptide reads, in one-letter code: Catalase-peroxidase (737 aa).

The disordered stretch occupies residues Met1 to Lys32. The span at Gly20–Lys32 shows a compositional bias: polar residues. The segment at residues Trp103 to Tyr226 is a cross-link (tryptophyl-tyrosyl-methioninium (Trp-Tyr) (with M-252)). The active-site Proton acceptor is His104. A cross-link (tryptophyl-tyrosyl-methioninium (Tyr-Met) (with W-103)) is located at residues Tyr226 to Met252. Position 267 (His267) interacts with heme b.

The protein belongs to the peroxidase family. Peroxidase/catalase subfamily. Homodimer or homotetramer. Heme b is required as a cofactor. Post-translationally, formation of the three residue Trp-Tyr-Met cross-link is important for the catalase, but not the peroxidase activity of the enzyme.

It carries out the reaction H2O2 + AH2 = A + 2 H2O. The enzyme catalyses 2 H2O2 = O2 + 2 H2O. Its function is as follows. Bifunctional enzyme with both catalase and broad-spectrum peroxidase activity. This is Catalase-peroxidase from Marinomonas sp. (strain MWYL1).